Consider the following 276-residue polypeptide: Radial spoke head protein 9 homolog (276 aa).

It belongs to the flagellar radial spoke RSP9 family. As to quaternary structure, component of the axonemal radial spoke 1 (RS1) and 2 (RS2) complexes, at least composed of spoke head proteins RSPH1, RSPH3, RSPH9 and the cilia-specific component RSPH4A or sperm-specific component RSPH6A, spoke stalk proteins RSPH14, DNAJB13, DYDC1, ROPN1L and NME5, and the RS1 complex-specific anchor protein IQUB. Interacts with IQUB. Interacts with RSPH3B. Interacts with RSPH4A. Interacts with RSPH6A. Interacts with CFAP61. Interacts with LRRC23.

Its subcellular location is the cytoplasm. It localises to the cytoskeleton. The protein localises to the cilium axoneme. The protein resides in the flagellum axoneme. It is found in the cell projection. Its subcellular location is the kinocilium. Functions as part of axonemal radial spoke complexes that play an important part in the motility of sperm and cilia. Essential for both the radial spoke head assembly and the central pair microtubule stability in ependymal motile cilia. Required for motility of olfactory and neural cilia and for the structural integrity of ciliary axonemes in both 9+0 and 9+2 motile cilia. This Bos taurus (Bovine) protein is Radial spoke head protein 9 homolog (RSPH9).